The sequence spans 108 residues: Transcription factor AmrZ (108 aa).

Functionally, functions both as a transcriptional activator and a repressor of multiple genes encoding virulence factors as well as genes involved in environmental adaptation. Represses genes involved in iron homeostasis. Modulates intracellular levels of c-di-GMP which in turn regulates swimming motility and biofilm formation. The chain is Transcription factor AmrZ from Pseudomonas ogarae (strain DSM 112162 / CECT 30235 / F113).